A 430-amino-acid chain; its full sequence is KIN17-like protein (430 aa).

The C2H2-type zinc finger occupies 28-50 (CQMCQKQCRDENGFKCHCMSESH). The interval 51-160 (QRQMQVFGQA…KARLKRKRIK (110 aa)) is winged helix-turn-helix (wHTH). Residues 147 to 183 (EQAVKARLKRKRIKSDLAEDERQERMIARQIERAQQS) are a coiled coil. Positions 155 to 158 (KRKR) match the Nuclear localization signal (NLS) motif. Disordered stretches follow at residues 179–230 (RAQQ…ANKA) and 261–284 (EEED…GKDA). Residues 209-224 (EYSDSENDHEGQEEDA) show a composition bias toward acidic residues. Positions 261 to 278 (EEEDEVSARDKEKEELAK) are enriched in basic and acidic residues. Residues 283–312 (DAINAAEARRSALDELMKEEEKAKERSNRK) are a coiled coil. The tract at residues 319–370 (GIVVKVMSKSLAEKGYCKQKGVVKRVIDKYVGEIEMLESKHVLRVDQDELET) is C-terminal subdomain A. Positions 376–427 (GGLVRIVNGAYRGSNARLLSVDTERFCAKVQVEKGLYDGKVLKAIEYEDICK) are C-terminal subdomain B.

It belongs to the KIN17 family.

It is found in the nucleus. This Oryza sativa subsp. indica (Rice) protein is KIN17-like protein.